The primary structure comprises 98 residues: Defensin-B (98 aa).

The N-terminal stretch at 1–20 (MKSITVICFLALCTVAITSA) is a signal peptide. Positions 21–58 (YPQEPVLADEARPFANSLFDELPEETYQAAVENFRLKR) are excised as a propeptide. Intrachain disulfides connect Cys61–Cys88, Cys74–Cys94, and Cys78–Cys96.

It belongs to the invertebrate defensin family. Type 1 subfamily.

It localises to the secreted. Its function is as follows. Antibacterial peptide mostly active against Gram-positive bacteria. In Aedes aegypti (Yellowfever mosquito), this protein is Defensin-B (DEFB).